The chain runs to 120 residues: Large ribosomal subunit protein uL14 (120 aa).

It belongs to the universal ribosomal protein uL14 family. In terms of assembly, part of the 50S ribosomal subunit. Forms a cluster with proteins L3 and L19. In the 70S ribosome, L14 and L19 interact and together make contacts with the 16S rRNA in bridges B5 and B8.

Its function is as follows. Binds to 23S rRNA. Forms part of two intersubunit bridges in the 70S ribosome. The polypeptide is Large ribosomal subunit protein uL14 (Dictyoglomus thermophilum (strain ATCC 35947 / DSM 3960 / H-6-12)).